A 558-amino-acid polypeptide reads, in one-letter code: Dihydroxy-acid dehydratase (558 aa).

C48 is a binding site for [2Fe-2S] cluster. D80 contributes to the Mg(2+) binding site. Position 121 (C121) interacts with [2Fe-2S] cluster. D122 and K123 together coordinate Mg(2+). K123 carries the N6-carboxylysine modification. C193 is a binding site for [2Fe-2S] cluster. A Mg(2+)-binding site is contributed by E445. S471 serves as the catalytic Proton acceptor.

The protein belongs to the IlvD/Edd family. Homodimer. [2Fe-2S] cluster is required as a cofactor. Mg(2+) serves as cofactor.

The catalysed reaction is (2R)-2,3-dihydroxy-3-methylbutanoate = 3-methyl-2-oxobutanoate + H2O. It catalyses the reaction (2R,3R)-2,3-dihydroxy-3-methylpentanoate = (S)-3-methyl-2-oxopentanoate + H2O. Its pathway is amino-acid biosynthesis; L-isoleucine biosynthesis; L-isoleucine from 2-oxobutanoate: step 3/4. It functions in the pathway amino-acid biosynthesis; L-valine biosynthesis; L-valine from pyruvate: step 3/4. Functions in the biosynthesis of branched-chain amino acids. Catalyzes the dehydration of (2R,3R)-2,3-dihydroxy-3-methylpentanoate (2,3-dihydroxy-3-methylvalerate) into 2-oxo-3-methylpentanoate (2-oxo-3-methylvalerate) and of (2R)-2,3-dihydroxy-3-methylbutanoate (2,3-dihydroxyisovalerate) into 2-oxo-3-methylbutanoate (2-oxoisovalerate), the penultimate precursor to L-isoleucine and L-valine, respectively. This is Dihydroxy-acid dehydratase from Prochlorococcus marinus (strain SARG / CCMP1375 / SS120).